The sequence spans 173 residues: NADH-quinone oxidoreductase subunit B 1 (173 aa).

4 residues coordinate [4Fe-4S] cluster: C42, C43, C107, and C137.

It belongs to the complex I 20 kDa subunit family. In terms of assembly, NDH-1 is composed of 14 different subunits. Subunits NuoB, C, D, E, F, and G constitute the peripheral sector of the complex. Requires [4Fe-4S] cluster as cofactor.

Its subcellular location is the cell inner membrane. It catalyses the reaction a quinone + NADH + 5 H(+)(in) = a quinol + NAD(+) + 4 H(+)(out). Its function is as follows. NDH-1 shuttles electrons from NADH, via FMN and iron-sulfur (Fe-S) centers, to quinones in the respiratory chain. The immediate electron acceptor for the enzyme in this species is believed to be ubiquinone. Couples the redox reaction to proton translocation (for every two electrons transferred, four hydrogen ions are translocated across the cytoplasmic membrane), and thus conserves the redox energy in a proton gradient. The sequence is that of NADH-quinone oxidoreductase subunit B 1 from Anaeromyxobacter sp. (strain K).